We begin with the raw amino-acid sequence, 156 residues long: ATP synthase subunit b (156 aa).

A helical transmembrane segment spans residues 7–29 (LLGQAISFALFVWFCIKFVWPPL).

The protein belongs to the ATPase B chain family. As to quaternary structure, F-type ATPases have 2 components, F(1) - the catalytic core - and F(0) - the membrane proton channel. F(1) has five subunits: alpha(3), beta(3), gamma(1), delta(1), epsilon(1). F(0) has three main subunits: a(1), b(2) and c(10-14). The alpha and beta chains form an alternating ring which encloses part of the gamma chain. F(1) is attached to F(0) by a central stalk formed by the gamma and epsilon chains, while a peripheral stalk is formed by the delta and b chains.

The protein localises to the cell inner membrane. F(1)F(0) ATP synthase produces ATP from ADP in the presence of a proton or sodium gradient. F-type ATPases consist of two structural domains, F(1) containing the extramembraneous catalytic core and F(0) containing the membrane proton channel, linked together by a central stalk and a peripheral stalk. During catalysis, ATP synthesis in the catalytic domain of F(1) is coupled via a rotary mechanism of the central stalk subunits to proton translocation. In terms of biological role, component of the F(0) channel, it forms part of the peripheral stalk, linking F(1) to F(0). This is ATP synthase subunit b from Shewanella sp. (strain W3-18-1).